Here is a 649-residue protein sequence, read N- to C-terminus: Solute carrier family 22 member 17 (649 aa).

The segment at 1–70 is disordered; the sequence is MAPRVATGTP…GGDGLGSSLS (70 aa). Residues 24–34 show a composition bias toward polar residues; it reads VEITPTSNGQV. Residues 47-57 show a composition bias toward basic and acidic residues; the sequence is QGEREREREGE. N-linked (GlcNAc...) asparagine glycans are attached at residues asparagine 134 and asparagine 143. The next 11 helical transmembrane spans lie at 211-231, 240-260, 265-285, 300-320, 330-350, 414-433, 448-468, 477-497, 526-546, 557-577, and 584-604; these read VILEQILFILGFASGYLFLGY, GIVLLTLGLVGPCGVGGAAAG, VMALRFLLGFLLAGVDLGVYL, ALAGELVGVGGHFLFLGLALV, MITAPCILFLFYGWPGLFLES, NIWKNLLILGFTNFIAHAIR, FYLCSLLASGTAALACVFLGV, GILLLSMTLTGIASLVLLGLW, FSVLGLFSSQAAAILSTLLAA, GLGLIMALGALGGLSGPAQRL, and FLQHVVLAACALLCILSIMLL.

It belongs to the major facilitator (TC 2.A.1) superfamily. Organic cation transporter (TC 2.A.1.19) family. As to expression, expressed in brain.

Its subcellular location is the cell membrane. The protein localises to the vacuole membrane. Functionally, cell surface receptor for LCN2 (24p3) that plays a key role in iron homeostasis and transport. Able to bind iron-bound LCN2 (holo-24p3), followed by internalization of holo-24p3 and release of iron, thereby increasing intracellular iron concentration and leading to inhibition of apoptosis. Also binds iron-free LCN2 (apo-24p3), followed by internalization of apo-24p3 and its association with an intracellular siderophore, leading to iron chelation and iron transfer to the extracellular medium, thereby reducing intracellular iron concentration and resulting in apoptosis. The chain is Solute carrier family 22 member 17 (SLC22A17) from Homo sapiens (Human).